The sequence spans 315 residues: Methionyl-tRNA formyltransferase (315 aa).

109–112 (SLLP) contributes to the (6S)-5,6,7,8-tetrahydrofolate binding site.

This sequence belongs to the Fmt family.

It catalyses the reaction L-methionyl-tRNA(fMet) + (6R)-10-formyltetrahydrofolate = N-formyl-L-methionyl-tRNA(fMet) + (6S)-5,6,7,8-tetrahydrofolate + H(+). Functionally, attaches a formyl group to the free amino group of methionyl-tRNA(fMet). The formyl group appears to play a dual role in the initiator identity of N-formylmethionyl-tRNA by promoting its recognition by IF2 and preventing the misappropriation of this tRNA by the elongation apparatus. This chain is Methionyl-tRNA formyltransferase, found in Lachnospira eligens (strain ATCC 27750 / DSM 3376 / VPI C15-48 / C15-B4) (Eubacterium eligens).